The sequence spans 729 residues: MPKNSKVVKRDLDDDVIESVKDLLSNEDSVEEVSKKSELIVDVQEEKDTDAEDGSEADDERPAWNSKLQYILAQVGFSVGLGNVWRFPYLCQKNGGGAYLLPYLILLLVIGIPLFFLELSVGQRIRRGSIGVWNYISPKLGGIGFASCVVCYFVALYYNVIIGWTLFYFSQSFQQPLPWDQCPLVKNASHTYVEPECEQSSATTYYWYREALDITSSISDSGGLNWKMTVCLLVAWVMVCLAMIKGIQSSGKIMYFSSLFPYVVLICFLIRSLLLNGSIDGIRHMFTPKLEMMLEPKVWREAATQVFFALGLGFGGVIAFSSYNKRDNNCHFDAVLVSFINFFTSVLATLVVFAVLGFKANIVNEKCISQNSEMILKLLKMGNISWDVIPHHINLSAVTVEDYRLVYDIIQKVKEEEFAVLHLNACQIEDELNKAVQGTGLAFIAFTEAMTHFPASPFWSVMFFLMLINLGLGSMFGTIEGIITPIVDTFKVRKEILTVICCLLAFCIGLIFVQRSGNYFVTMFDDYSATLPLLIVVILENIAVSFVYGIDKFIEDLTDMLGFAPSKYYYYMWKYISPLMLLTLLIASIVNMGLSPPGYNAWIKEKASEEFLSYPMWGMVVCFSLMVLAILPVPVVFIIRRCNLIDDSSGNLASVTYKRGRVLKEPVNLEGDDASLIHGKIPSEMSSPNFGKNIYRKQSGSPTLDTAPNGRYGIGYLMADMPDMPESDL.

The Cytoplasmic segment spans residues 1–69 (MPKNSKVVKR…ERPAWNSKLQ (69 aa)). Phosphoserine occurs at positions 25 and 55. The segment at 42-61 (DVQEEKDTDAEDGSEADDER) is disordered. Positions 43–59 (VQEEKDTDAEDGSEADD) are enriched in acidic residues. Transmembrane regions (helical) follow at residues 70-90 (YILA…FPYL), 98-117 (AYLL…LFFL), and 142-162 (GIGF…NVII). The Extracellular portion of the chain corresponds to 163–225 (GWTLFYFSQS…SSISDSGGLN (63 aa)). A glycan (N-linked (GlcNAc...) asparagine) is linked at Asn187. The next 2 membrane-spanning stretches (helical) occupy residues 226 to 244 (WKMT…LAMI) and 253 to 270 (IMYF…CFLI). The N-linked (GlcNAc...) asparagine glycan is linked to Asn276. Transmembrane regions (helical) follow at residues 306–323 (VFFA…FSSY) and 335–356 (VLVS…FAVL). The Extracellular portion of the chain corresponds to 357-452 (GFKANIVNEK…FIAFTEAMTH (96 aa)). N-linked (GlcNAc...) asparagine glycans are attached at residues Asn383 and Asn394. 5 helical membrane-spanning segments follow: residues 453-472 (FPAS…NLGL), 496-514 (ILTV…IFVQ), 530-550 (TLPL…VYGI), 571-592 (YMWK…IVNM), and 620-642 (VVCF…IRRC). Topologically, residues 643-729 (NLIDDSSGNL…DMPDMPESDL (87 aa)) are cytoplasmic. 3 positions are modified to phosphoserine: Ser687, Ser699, and Ser701.

It belongs to the sodium:neurotransmitter symporter (SNF) (TC 2.A.22) family. SLC6A15 subfamily. In terms of tissue distribution, significant expressed in brain, lung and kidney. In brain, mainly expressed int the cortex, the cerebellum and the brain stem.

It is found in the membrane. The enzyme catalyses L-pipecolate(in) + Na(+)(in) = L-pipecolate(out) + Na(+)(out). It carries out the reaction L-leucine(in) + Na(+)(in) = L-leucine(out) + Na(+)(out). It catalyses the reaction L-isoleucine(in) + Na(+)(in) = L-isoleucine(out) + Na(+)(out). The catalysed reaction is L-methionine(in) + Na(+)(in) = L-methionine(out) + Na(+)(out). The enzyme catalyses L-proline(in) + Na(+)(in) = L-proline(out) + Na(+)(out). It carries out the reaction L-alanine(in) + Na(+)(in) = L-alanine(out) + Na(+)(out). It catalyses the reaction L-asparagine(in) + Na(+)(in) = L-asparagine(out) + Na(+)(out). The catalysed reaction is L-valine(in) + Na(+)(in) = L-valine(out) + Na(+)(out). The enzyme catalyses L-cysteine(in) + Na(+)(in) = L-cysteine(out) + Na(+)(out). It carries out the reaction L-glutamine(in) + Na(+)(in) = L-glutamine(out) + Na(+)(out). It catalyses the reaction L-serine(in) + Na(+)(in) = L-serine(out) + Na(+)(out). The catalysed reaction is L-threonine(in) + Na(+)(in) = L-threonine(out) + Na(+)(out). The enzyme catalyses L-phenylalanine(in) + Na(+)(in) = L-phenylalanine(out) + Na(+)(out). Functions as a sodium-dependent neutral amino acid transporter. Exhibits preference for methionine and for the branched-chain amino acids, particularly leucine, valine and isoleucine. Can also transport low-affinity substrates such as alanine, phenylalanine, glutamine and pipecolic acid. Mediates the saturable, pH-sensitive and electrogenic cotransport of proline and sodium ions with a stoichiometry of 1:1. May have a role as transporter for neurotransmitter precursors into neurons. In contrast to other members of the neurotransmitter transporter family, does not appear to be chloride-dependent. In Mus musculus (Mouse), this protein is Sodium-dependent neutral amino acid transporter B(0)AT2 (Slc6a15).